The primary structure comprises 370 residues: tRNA N(3)-cytidine methyltransferase METTL2 (370 aa).

S-adenosyl-L-methionine is bound by residues Trp-72, Tyr-76, Gly-181, Asp-206, Asp-232, Leu-233, and Ile-253.

This sequence belongs to the methyltransferase superfamily. METL family. In terms of assembly, monomer.

Its subcellular location is the cytoplasm. It carries out the reaction cytidine(32) in tRNA(Thr) + S-adenosyl-L-methionine = N(3)-methylcytidine(32) in tRNA(Thr) + S-adenosyl-L-homocysteine + H(+). The catalysed reaction is cytidine(32) in tRNA(Arg)(CCU) + S-adenosyl-L-methionine = N(3)-methylcytidine(32) in tRNA(Arg)(CCU) + S-adenosyl-L-homocysteine + H(+). S-adenosyl-L-methionine-dependent methyltransferase that mediates N(3)-methylcytidine modification of residue 32 of the tRNA anticodon loop of tRNA(Thr)(UGU) and tRNA(Arg)(CCU). N(3)-methylcytidine methylation by METTL2 requires the N6-threonylcarbamoylation of tRNA (t6A37) by the EKC/KEOPS complex as prerequisite. The polypeptide is tRNA N(3)-cytidine methyltransferase METTL2 (METTL2) (Gallus gallus (Chicken)).